A 627-amino-acid chain; its full sequence is Polyadenylate-binding protein, cytoplasmic and nuclear (627 aa).

Residues 1–11 (MSAADANQVQE) show a composition bias toward polar residues. Positions 1 to 46 (MSAADANQVQESLEKLNLDSAPVASTEETEQTASGETEEAADSAQV) are disordered. RRM domains are found at residues 51-129 (ASLY…WSQR), 139-216 (GNIF…KHIS), 232-309 (TNVY…RAQK), and 335-412 (VNLF…LAQR). Over residues 511-535 (DFNNGANGGRQQRGYYPNRNQNQKG) the composition is skewed to low complexity. A disordered region spans residues 511–537 (DFNNGANGGRQQRGYYPNRNQNQKGRQ). Positions 537-618 (QQKDLAAIIA…ALTAFEEYKK (82 aa)) constitute a PABC domain.

It belongs to the polyadenylate-binding protein type-1 family.

The protein localises to the cytoplasm. It is found in the nucleus. In terms of biological role, binds the poly(A) tail of mRNA. Appears to be an important mediator of the multiple roles of the poly(A) tail in mRNA biogenesis, stability and translation. In the nucleus, involved in both mRNA cleavage and polyadenylation. Is also required for efficient mRNA export to the cytoplasm. Acts in concert with a poly(A)-specific nuclease (PAN) to affect poly(A) tail shortening, which may occur concomitantly with either nucleocytoplasmic mRNA transport or translational initiation. In the cytoplasm, stimulates translation initiation and regulates mRNA decay through translation termination-coupled poly(A) shortening, probably mediated by PAN. This chain is Polyadenylate-binding protein, cytoplasmic and nuclear (PAB1), found in Debaryomyces hansenii (strain ATCC 36239 / CBS 767 / BCRC 21394 / JCM 1990 / NBRC 0083 / IGC 2968) (Yeast).